The sequence spans 227 residues: Cytochrome c oxidase subunit 2 (227 aa).

Residues 1–26 (MATWSNLNLQNSSSPLMEQLIFFHDH) are Mitochondrial intermembrane-facing. A helical transmembrane segment spans residues 27–48 (TLMILLMITVLVAYIMSMLFFN). The Mitochondrial matrix portion of the chain corresponds to 49-62 (LYTNRFLLEGQTIE). A helical transmembrane segment spans residues 63–82 (IIWTILPAITLIFIALPSLR). Over 83–227 (LLYLLDESMD…FINWIKNYSS (145 aa)) the chain is Mitochondrial intermembrane. Residues His-160, Cys-195, Glu-197, Cys-199, His-203, and Met-206 each contribute to the Cu cation site. Glu-197 serves as a coordination point for Mg(2+).

This sequence belongs to the cytochrome c oxidase subunit 2 family. Component of the cytochrome c oxidase (complex IV, CIV), a multisubunit enzyme composed of a catalytic core of 3 subunits and several supernumerary subunits. The complex exists as a monomer or a dimer and forms supercomplexes (SCs) in the inner mitochondrial membrane with ubiquinol-cytochrome c oxidoreductase (cytochrome b-c1 complex, complex III, CIII). Cu cation serves as cofactor.

The protein resides in the mitochondrion inner membrane. The enzyme catalyses 4 Fe(II)-[cytochrome c] + O2 + 8 H(+)(in) = 4 Fe(III)-[cytochrome c] + 2 H2O + 4 H(+)(out). Functionally, component of the cytochrome c oxidase, the last enzyme in the mitochondrial electron transport chain which drives oxidative phosphorylation. The respiratory chain contains 3 multisubunit complexes succinate dehydrogenase (complex II, CII), ubiquinol-cytochrome c oxidoreductase (cytochrome b-c1 complex, complex III, CIII) and cytochrome c oxidase (complex IV, CIV), that cooperate to transfer electrons derived from NADH and succinate to molecular oxygen, creating an electrochemical gradient over the inner membrane that drives transmembrane transport and the ATP synthase. Cytochrome c oxidase is the component of the respiratory chain that catalyzes the reduction of oxygen to water. Electrons originating from reduced cytochrome c in the intermembrane space (IMS) are transferred via the dinuclear copper A center (CU(A)) of subunit 2 and heme A of subunit 1 to the active site in subunit 1, a binuclear center (BNC) formed by heme A3 and copper B (CU(B)). The BNC reduces molecular oxygen to 2 water molecules using 4 electrons from cytochrome c in the IMS and 4 protons from the mitochondrial matrix. The protein is Cytochrome c oxidase subunit 2 (COII) of Acheta domesticus (House cricket).